Reading from the N-terminus, the 358-residue chain is Probable aminomethyltransferase (358 aa).

This sequence belongs to the GcvT family. As to quaternary structure, the glycine cleavage system is composed of four proteins: P, T, L and H.

The catalysed reaction is N(6)-[(R)-S(8)-aminomethyldihydrolipoyl]-L-lysyl-[protein] + (6S)-5,6,7,8-tetrahydrofolate = N(6)-[(R)-dihydrolipoyl]-L-lysyl-[protein] + (6R)-5,10-methylene-5,6,7,8-tetrahydrofolate + NH4(+). The glycine cleavage system catalyzes the degradation of glycine. The protein is Probable aminomethyltransferase of Natronomonas pharaonis (strain ATCC 35678 / DSM 2160 / CIP 103997 / JCM 8858 / NBRC 14720 / NCIMB 2260 / Gabara) (Halobacterium pharaonis).